The chain runs to 166 residues: Putative 4-hydroxy-4-methyl-2-oxoglutarate aldolase (166 aa).

Substrate-binding positions include 81–84 (GDII) and Arg103. Asp104 is a binding site for a divalent metal cation.

This sequence belongs to the class II aldolase/RraA-like family. Homotrimer. The cofactor is a divalent metal cation.

The catalysed reaction is 4-hydroxy-4-methyl-2-oxoglutarate = 2 pyruvate. The enzyme catalyses oxaloacetate + H(+) = pyruvate + CO2. Functionally, catalyzes the aldol cleavage of 4-hydroxy-4-methyl-2-oxoglutarate (HMG) into 2 molecules of pyruvate. Also contains a secondary oxaloacetate (OAA) decarboxylase activity due to the common pyruvate enolate transition state formed following C-C bond cleavage in the retro-aldol and decarboxylation reactions. The sequence is that of Putative 4-hydroxy-4-methyl-2-oxoglutarate aldolase from Corynebacterium glutamicum (strain ATCC 13032 / DSM 20300 / JCM 1318 / BCRC 11384 / CCUG 27702 / LMG 3730 / NBRC 12168 / NCIMB 10025 / NRRL B-2784 / 534).